The primary structure comprises 71 residues: Large ribosomal subunit protein uL30 (71 aa).

This sequence belongs to the universal ribosomal protein uL30 family. Part of the 50S ribosomal subunit.

The sequence is that of Large ribosomal subunit protein uL30 from Mycobacterium leprae (strain TN).